The primary structure comprises 1407 residues: YEATS domain-containing protein 2 (1407 aa).

Residue Lys-9 forms a Glycyl lysine isopeptide (Lys-Gly) (interchain with G-Cter in SUMO2) linkage. The stretch at 54–80 (MKNKEHEIDVIDQRLIEARRMMDKLRA) forms a coiled coil. A Glycyl lysine isopeptide (Lys-Gly) (interchain with G-Cter in SUMO2) cross-link involves residue Lys-113. A disordered region spans residues 116-196 (LESPSRSSSP…SHKRELRNAD (81 aa)). Ser-118, Ser-120, and Ser-157 each carry phosphoserine. Over residues 119 to 148 (PSRSSSPTNQRSETPSANHSESDSLSQHND) the composition is skewed to polar residues. Positions 149-165 (FLSDKDNNSNVDVEERP) are enriched in basic and acidic residues. Lys-189 participates in a covalent cross-link: Glycyl lysine isopeptide (Lys-Gly) (interchain with G-Cter in SUMO2). The YEATS domain maps to 201 to 346 (ETSRLFVKKT…EDSVYPQSSE (146 aa)). Histone H3K27cr binding stretches follow at residues 260–262 (HPS) and 283–285 (WGE). A Phosphothreonine modification is found at Thr-406. 5 positions are modified to phosphoserine: Ser-446, Ser-462, Ser-464, Ser-470, and Ser-472. The segment at 462 to 540 (SGSPISTPSP…GTGSPIPKIH (79 aa)) is disordered. Residue Thr-477 is modified to Phosphothreonine. Residue Lys-486 forms a Glycyl lysine isopeptide (Lys-Gly) (interchain with G-Cter in SUMO2) linkage. Over residues 511 to 520 (STPSTGSPTS) the composition is skewed to low complexity. Ser-534 carries the post-translational modification Phosphoserine. Residue Lys-550 forms a Glycyl lysine isopeptide (Lys-Gly) (interchain with G-Cter in SUMO2) linkage. Ser-573 carries the phosphoserine modification. Lys-590 is covalently cross-linked (Glycyl lysine isopeptide (Lys-Gly) (interchain with G-Cter in SUMO2)). Ser-625 carries the post-translational modification Phosphoserine. Glycyl lysine isopeptide (Lys-Gly) (interchain with G-Cter in SUMO2) cross-links involve residues Lys-647 and Lys-771. The interval 791 to 833 (SGSAAAGGSGSSGAGGGSGGGGGSGAGGTPSTSGPGGGPQHLT) is disordered. Residues 795-829 (AAGGSGSSGAGGGSGGGGGSGAGGTPSTSGPGGGP) show a composition bias toward gly residues. Lys-908 is covalently cross-linked (Glycyl lysine isopeptide (Lys-Gly) (interchain with G-Cter in SUMO2)). Lys-1095 is covalently cross-linked (Glycyl lysine isopeptide (Lys-Gly) (interchain with G-Cter in SUMO1); alternate). Residue Lys-1095 forms a Glycyl lysine isopeptide (Lys-Gly) (interchain with G-Cter in SUMO2); alternate linkage. Residue Lys-1115 forms a Glycyl lysine isopeptide (Lys-Gly) (interchain with G-Cter in SUMO2) linkage. Thr-1204 carries the phosphothreonine modification. Glycyl lysine isopeptide (Lys-Gly) (interchain with G-Cter in SUMO2) cross-links involve residues Lys-1207 and Lys-1270.

Component of the ADA2A-containing complex (ATAC), composed of KAT14, KAT2A, TADA2L, TADA3L, ZZ3, MBIP, WDR5, YEATS2, SGF29 and DR1.

It localises to the nucleus. Its function is as follows. Chromatin reader component of the ATAC complex, a complex with histone acetyltransferase activity on histones H3 and H4. YEATS2 specifically recognizes and binds histone H3 crotonylated at 'Lys-27' (H3K27cr). Crotonylation marks active promoters and enhancers and confers resistance to transcriptional repressors. This Mus musculus (Mouse) protein is YEATS domain-containing protein 2.